We begin with the raw amino-acid sequence, 431 residues long: Glutamate-1-semialdehyde 2,1-aminomutase (431 aa).

Lys-269 carries the N6-(pyridoxal phosphate)lysine modification.

This sequence belongs to the class-III pyridoxal-phosphate-dependent aminotransferase family. HemL subfamily. In terms of assembly, homodimer. Pyridoxal 5'-phosphate serves as cofactor.

It is found in the cytoplasm. The catalysed reaction is (S)-4-amino-5-oxopentanoate = 5-aminolevulinate. It participates in porphyrin-containing compound metabolism; protoporphyrin-IX biosynthesis; 5-aminolevulinate from L-glutamyl-tRNA(Glu): step 2/2. The protein operates within porphyrin-containing compound metabolism; chlorophyll biosynthesis. The protein is Glutamate-1-semialdehyde 2,1-aminomutase of Chlorobium chlorochromatii (strain CaD3).